We begin with the raw amino-acid sequence, 66 residues long: Jindongenin-1a (66 aa).

The first 22 residues, Met1–Cys22, serve as a signal peptide directing secretion. A propeptide spanning residues Glu23–Val40 is cleaved from the precursor. Residues Cys60 and Cys66 are joined by a disulfide bond.

In terms of tissue distribution, expressed by the skin glands.

Its subcellular location is the secreted. Displays broad-spectrum antibacterial activity against a range of Gram-positive and Gram-negative bacteria. Also displays antifungal activity against C.albicans ATCC 2002. Has low hemolytic activity, low cytotoxicity and low antioxidant activity. This is Jindongenin-1a from Amolops jingdongensis (Chinese torrent frog).